The following is a 156-amino-acid chain: Lipoprotein signal peptidase (156 aa).

The next 3 membrane-spanning stretches (helical) occupy residues Phe-5 to Val-25, Tyr-64 to Leu-84, and Ile-89 to Gly-109. Residues Asp-113 and Asp-130 contribute to the active site. A helical membrane pass occupies residues Asn-122–Ile-142.

Belongs to the peptidase A8 family.

It is found in the cell inner membrane. The catalysed reaction is Release of signal peptides from bacterial membrane prolipoproteins. Hydrolyzes -Xaa-Yaa-Zaa-|-(S,diacylglyceryl)Cys-, in which Xaa is hydrophobic (preferably Leu), and Yaa (Ala or Ser) and Zaa (Gly or Ala) have small, neutral side chains.. Its pathway is protein modification; lipoprotein biosynthesis (signal peptide cleavage). Its function is as follows. This protein specifically catalyzes the removal of signal peptides from prolipoproteins. This is Lipoprotein signal peptidase from Campylobacter jejuni subsp. jejuni serotype O:2 (strain ATCC 700819 / NCTC 11168).